Consider the following 362-residue polypeptide: 3-dehydroquinate synthase (362 aa).

Residues 71–76, 105–109, 129–130, K142, K151, and 169–172 each bind NAD(+); these read DGEQYK, GVIGD, TT, and CLKT. Zn(2+) contacts are provided by E184, H247, and H264.

This sequence belongs to the sugar phosphate cyclases superfamily. Dehydroquinate synthase family. The cofactor is NAD(+). It depends on Co(2+) as a cofactor. Zn(2+) serves as cofactor.

It is found in the cytoplasm. It carries out the reaction 7-phospho-2-dehydro-3-deoxy-D-arabino-heptonate = 3-dehydroquinate + phosphate. It functions in the pathway metabolic intermediate biosynthesis; chorismate biosynthesis; chorismate from D-erythrose 4-phosphate and phosphoenolpyruvate: step 2/7. Catalyzes the conversion of 3-deoxy-D-arabino-heptulosonate 7-phosphate (DAHP) to dehydroquinate (DHQ). This Salmonella typhi protein is 3-dehydroquinate synthase.